The following is a 687-amino-acid chain: POZ (BTB) and AT hook-containing zinc finger 1 (687 aa).

The BTB domain occupies 41–130 (CDVLLRVGDE…AYTSRIVVRL (90 aa)). A compositionally biased stretch (polar residues) spans 250-260 (PFPNVASSAPP). Residues 250–279 (PFPNVASSAPPLTSKRGRGRPRKANLLDSM) form a disordered region. Residues 292 to 314 (LPCGLCGKVFTDANRLRQHEAQH) form a C2H2-type 1 zinc finger. Residues 332-351 (GENGLPISEDPDGPRKRSRT) are disordered. 5 consecutive C2H2-type zinc fingers follow at residues 355-377 (VACE…KLSH), 383-405 (YSCP…VRSH), 413-436 (YICQ…KQVH), 442-464 (HKCQ…LACH), and 495-517 (NFCS…VKTH). The tract at residues 564-587 (SYGDLSDASDLKTPEKQSANGSFS) is disordered. The C2H2-type 7 zinc-finger motif lies at 605 to 628 (YPCPECGSFFRSKSYLNKHIQKVH).

Homodimer. Interacts with RNF4. Interacts (via C-terminus) with TP53; this interaction inhibits TP53 ability to activate transcription. In terms of tissue distribution, widely expressed at high levels during embryogenesis, especially in the central nervous system, especially to the actively proliferating neuroblasts in the periventricular neocortical neuroepithelium, in the telencephalic cortical plate and in the hippocampus. Also expressed in a stage-specific manner in the mouse germinal epithelium. While strongly expressed during brain development,m its expression turns down in adult brain.

It localises to the nucleus. In terms of biological role, transcriptional regulator that plays a role in many biological processes such as embryogenesis, senescence, T-cell development or neurogenesis. Interacts with the TP53 protein to control genes that are important in proliferation and in the DNA-damage response. Mechanistically, the interaction inhibits the DNA binding and transcriptional activity of TP53/p53. Part of the transcriptional network modulating regulatory T-cell development and controls the generation of the regulatory T-cell pool under homeostatic conditions. This is POZ (BTB) and AT hook-containing zinc finger 1 from Mus musculus (Mouse).